We begin with the raw amino-acid sequence, 1034 residues long: Potassium-transporting ATPase alpha chain 1 (1034 aa).

Residues 2–97 (GKAENYELYQ…NALRPPRGTP (96 aa)) are Cytoplasmic-facing. Residues Tyr-7 and Tyr-10 each carry the phosphotyrosine modification. The disordered stretch occupies residues 13–40 (ELGPGPSGDMAAKMSKKKAGRGGGKRKE). The segment covering 26-39 (MSKKKAGRGGGKRK) has biased composition (basic residues). A Phosphoserine; by PKA and PKC modification is found at Ser-27. Residues 98–118 (EYVKFARQLAGGLQCLMWVAA) traverse the membrane as a helical segment. Topologically, residues 119-141 (AICLIAFAIQASEGDLTTDDNLY) are lumenal. A helical transmembrane segment spans residues 142 to 162 (LALALIAVVVVTGCFGYYQEF). Topologically, residues 163–298 (KSTNIIASFK…NEKTPIAIEI (136 aa)) are cytoplasmic. Residues 222-244 (KVDNSSLTGESEPQTRSPECTHE) are disordered. The segment covering 225–239 (NSSLTGESEPQTRSP) has biased composition (polar residues). A helical membrane pass occupies residues 299–318 (EHFVDIIAGLAILFGATFFI). The Lumenal segment spans residues 319-330 (VAMCIGYTFLRA). A helical membrane pass occupies residues 331–348 (MVFFMAIVVAYVPEGLLA). K(+) is bound by residues Val-339, Ala-340, Val-342, and Glu-344. Over 349–782 (TVTVCLSLTA…EQGRLIFDNL (434 aa)) the chain is Cytoplasmic. The active-site 4-aspartylphosphate intermediate is Asp-386. Mg(2+)-binding residues include Asp-386 and Thr-388. Ser-462 and Ser-600 each carry phosphoserine. Mg(2+)-binding residues include Asp-727 and Asp-731. The helical transmembrane segment at 783-802 (KKSIAYTLTKNIPELTPYLI) threads the bilayer. Glu-796 lines the K(+) pocket. Residues 803–812 (YITVSVPLPL) are Lumenal-facing. The helical transmembrane segment at 813-833 (GCITILFIELCTDIFPSVSLA) threads the bilayer. Glu-821 provides a ligand contact to K(+). At 834–853 (YEKAESDIMHLRPRNPKRDR) the chain is on the cytoplasmic side. The residue at position 839 (Ser-839) is a Phosphoserine. The chain crosses the membrane as a helical span at residues 854–876 (LVNEPLAAYSYFQIGAIQSFAGF). Residues 877 to 928 (TDYFTAMAQEGWFPLLCVGLRPQWENHHLQDLQDSYGQEWTFGQRLYQQYTC) are Lumenal-facing. Residues 929-948 (YTVFFISIEMCQIADVLIRK) traverse the membrane as a helical segment. The Cytoplasmic portion of the chain corresponds to 949–962 (TRRLSAFQQGFFRN). Ser-953 bears the Phosphoserine; by PKA mark. The chain crosses the membrane as a helical span at residues 963–981 (RILVIAIVFQVCIGCFLCY). The Lumenal segment spans residues 982–996 (CPGMPNIFNFMPIRF). A helical membrane pass occupies residues 997 to 1017 (QWWLVPMPFGLLIFVYDEIRK). Residues 1018–1034 (LGVRCCPGSWWDQELYY) are Cytoplasmic-facing.

It belongs to the cation transport ATPase (P-type) (TC 3.A.3) family. Type IIC subfamily. The gastric H(+)/K(+) ATPase pump is composed of the catalytic alpha subunit ATP4A and the regulatory beta subunit ATP4B. Interacts (via the P-domain) with ATP4B (via N-terminus); this interaction stabilizes the lumenal-open E2 conformation state and prevents the reverse reaction of the transport cycle.

Its subcellular location is the apical cell membrane. The protein resides in the cell membrane. It carries out the reaction K(+)(out) + ATP + H2O + H(+)(in) = K(+)(in) + ADP + phosphate + 2 H(+)(out). Its activity is regulated as follows. Down-regulated by K(+)-competitive acid blockers (P-CABs) such as vonoprazan. The catalytic subunit of the gastric H(+)/K(+) ATPase pump which transports H(+) ions in exchange for K(+) ions across the apical membrane of parietal cells. Uses ATP as an energy source to pump H(+) ions to the gastric lumen while transporting K(+) ion from the lumen into the cell. Remarkably generates a million-fold proton gradient across the gastric parietal cell membrane, acidifying the gastric juice down to pH 1. Within a transport cycle, the transfer of a H(+) ion across the membrane is coupled to ATP hydrolysis and is associated with a transient phosphorylation that shifts the pump conformation from inward-facing (E1) to outward-facing state (E2). The release of the H(+) ion in the stomach lumen is followed by binding of K(+) ion converting the pump conformation back to the E1 state. The protein is Potassium-transporting ATPase alpha chain 1 (ATP4A) of Sus scrofa (Pig).